The following is a 392-amino-acid chain: GTPase Obg (392 aa).

The 159-residue stretch at 1-159 (MKFVDEATIK…RELRLELLLL (159 aa)) folds into the Obg domain. The OBG-type G domain occupies 160–333 (ADVGMLGLPN…VCNELSDFMD (174 aa)). Residues 166–173 (GLPNAGKS), 191–195 (FTTLI), 213–216 (DIPG), 283–286 (NKTD), and 314–316 (AAV) contribute to the GTP site. 2 residues coordinate Mg(2+): S173 and T193. The tract at residues 364 to 392 (GKNVVTEDGDDDDDWDDEEDDGHVIYARD) is disordered. A compositionally biased stretch (acidic residues) spans 370–384 (EDGDDDDDWDDEEDD).

It belongs to the TRAFAC class OBG-HflX-like GTPase superfamily. OBG GTPase family. Monomer. The cofactor is Mg(2+).

The protein localises to the cytoplasm. Its function is as follows. An essential GTPase which binds GTP, GDP and possibly (p)ppGpp with moderate affinity, with high nucleotide exchange rates and a fairly low GTP hydrolysis rate. Plays a role in control of the cell cycle, stress response, ribosome biogenesis and in those bacteria that undergo differentiation, in morphogenesis control. The sequence is that of GTPase Obg from Aliivibrio salmonicida (strain LFI1238) (Vibrio salmonicida (strain LFI1238)).